A 202-amino-acid chain; its full sequence is ATP-dependent Clp protease proteolytic subunit (202 aa).

Serine 101 acts as the Nucleophile in catalysis. The active site involves histidine 126.

This sequence belongs to the peptidase S14 family. In terms of assembly, component of the chloroplastic Clp protease core complex.

The protein localises to the plastid. Its subcellular location is the chloroplast stroma. The catalysed reaction is Hydrolysis of proteins to small peptides in the presence of ATP and magnesium. alpha-casein is the usual test substrate. In the absence of ATP, only oligopeptides shorter than five residues are hydrolyzed (such as succinyl-Leu-Tyr-|-NHMec, and Leu-Tyr-Leu-|-Tyr-Trp, in which cleavage of the -Tyr-|-Leu- and -Tyr-|-Trp bonds also occurs).. Its function is as follows. Cleaves peptides in various proteins in a process that requires ATP hydrolysis. Has a chymotrypsin-like activity. Plays a major role in the degradation of misfolded proteins. The chain is ATP-dependent Clp protease proteolytic subunit from Liriodendron tulipifera (Tuliptree).